Reading from the N-terminus, the 323-residue chain is Beta-ketoacyl-[acyl-carrier-protein] synthase III (323 aa).

Active-site residues include C113 and H250. The interval 251-255 (QANKR) is ACP-binding. The active site involves N280.

The protein belongs to the thiolase-like superfamily. FabH family. As to quaternary structure, homodimer.

The protein resides in the cytoplasm. It carries out the reaction malonyl-[ACP] + acetyl-CoA + H(+) = 3-oxobutanoyl-[ACP] + CO2 + CoA. Its pathway is lipid metabolism; fatty acid biosynthesis. In terms of biological role, catalyzes the condensation reaction of fatty acid synthesis by the addition to an acyl acceptor of two carbons from malonyl-ACP. Catalyzes the first condensation reaction which initiates fatty acid synthesis and may therefore play a role in governing the total rate of fatty acid production. Possesses both acetoacetyl-ACP synthase and acetyl transacylase activities. Its substrate specificity determines the biosynthesis of branched-chain and/or straight-chain of fatty acids. This Chelativorans sp. (strain BNC1) protein is Beta-ketoacyl-[acyl-carrier-protein] synthase III.